A 140-amino-acid chain; its full sequence is Nucleoside diphosphate kinase (140 aa).

Lys-11, Phe-59, Arg-87, Thr-93, Arg-104, and Asn-114 together coordinate ATP. The active-site Pros-phosphohistidine intermediate is His-117.

Belongs to the NDK family. As to quaternary structure, homotetramer. Mg(2+) serves as cofactor.

It localises to the cytoplasm. It catalyses the reaction a 2'-deoxyribonucleoside 5'-diphosphate + ATP = a 2'-deoxyribonucleoside 5'-triphosphate + ADP. The enzyme catalyses a ribonucleoside 5'-diphosphate + ATP = a ribonucleoside 5'-triphosphate + ADP. In terms of biological role, major role in the synthesis of nucleoside triphosphates other than ATP. The ATP gamma phosphate is transferred to the NDP beta phosphate via a ping-pong mechanism, using a phosphorylated active-site intermediate. This Methylobacterium sp. (strain 4-46) protein is Nucleoside diphosphate kinase.